Reading from the N-terminus, the 353-residue chain is 3-deoxy-D-manno-octulosonic acid transferase (353 aa).

The active-site Proton acceptor is E31. CMP-binding positions include 211 to 212 (PR), 247 to 249 (FGI), and 273 to 276 (NLLE).

Belongs to the glycosyltransferase group 1 family. Glycosyltransferase 30 subfamily. In terms of assembly, can form homodimer, homotrimer and homotetramer.

The protein resides in the cell inner membrane. The enzyme catalyses lipid IVA (E. coli) + CMP-3-deoxy-beta-D-manno-octulosonate = alpha-Kdo-(2-&gt;6)-lipid IVA (E. coli) + CMP + H(+). The protein operates within bacterial outer membrane biogenesis; LPS core biosynthesis. Its function is as follows. Involved in lipopolysaccharide (LPS) biosynthesis. Catalyzes the transfer of a single 3-deoxy-D-manno-octulosonate (Kdo) residue from CMP-Kdo to lipid IV(A), the tetraacyldisaccharide-1,4'-bisphosphate precursor of lipid A. Is strictly monofunctional, i.e. is capable of adding only a single Kdo residue to the acceptor lipid. This Aquifex aeolicus (strain VF5) protein is 3-deoxy-D-manno-octulosonic acid transferase (kdtA).